Here is a 72-residue protein sequence, read N- to C-terminus: Osmotically-inducible lipoprotein B (72 aa).

Positions 1 to 23 (MFMTSKKMAAAVLAITVAMSLSA) are cleaved as a signal peptide. A lipid anchor (N-palmitoyl cysteine) is attached at Cys-24. Cys-24 is lipidated: S-diacylglycerol cysteine.

The protein localises to the cell membrane. In terms of biological role, provides resistance to osmotic stress. May be important for stationary-phase survival. The sequence is that of Osmotically-inducible lipoprotein B (osmB) from Salmonella typhimurium (strain LT2 / SGSC1412 / ATCC 700720).